Reading from the N-terminus, the 1024-residue chain is Beta-galactosidase (1024 aa).

Substrate contacts are provided by Asn103 and Asp202. Asp202 provides a ligand contact to Na(+). Mg(2+) is bound by residues Glu417, His419, and Glu462. Substrate-binding positions include Glu462 and 538–541 (EYAH). Glu462 serves as the catalytic Proton donor. The Nucleophile role is filled by Glu538. Mg(2+) is bound at residue Asn598. Na(+)-binding residues include Phe602 and Asn605. Substrate-binding residues include Asn605 and Trp1000.

It belongs to the glycosyl hydrolase 2 family. As to quaternary structure, homotetramer. It depends on Mg(2+) as a cofactor. Requires Na(+) as cofactor.

The enzyme catalyses Hydrolysis of terminal non-reducing beta-D-galactose residues in beta-D-galactosides.. This chain is Beta-galactosidase, found in Escherichia coli (strain UTI89 / UPEC).